The sequence spans 196 residues: Fe/S biogenesis protein NfuA (196 aa).

Residues Cys154 and Cys157 each coordinate [4Fe-4S] cluster.

This sequence belongs to the NfuA family. In terms of assembly, homodimer. [4Fe-4S] cluster serves as cofactor.

Involved in iron-sulfur cluster biogenesis. Binds a 4Fe-4S cluster, can transfer this cluster to apoproteins, and thereby intervenes in the maturation of Fe/S proteins. Could also act as a scaffold/chaperone for damaged Fe/S proteins. The sequence is that of Fe/S biogenesis protein NfuA from Blochmanniella pennsylvanica (strain BPEN).